Consider the following 247-residue polypeptide: Triosephosphate isomerase (247 aa).

9–11 is a binding site for substrate; the sequence is NWK. The Electrophile role is filled by His-94. The Proton acceptor role is filled by Glu-165. Residues Gly-171, Ser-209, and 230–231 each bind substrate; that span reads GG.

This sequence belongs to the triosephosphate isomerase family. As to quaternary structure, homodimer.

The protein resides in the cytoplasm. The catalysed reaction is D-glyceraldehyde 3-phosphate = dihydroxyacetone phosphate. It participates in carbohydrate biosynthesis; gluconeogenesis. It functions in the pathway carbohydrate degradation; glycolysis; D-glyceraldehyde 3-phosphate from glycerone phosphate: step 1/1. Involved in the gluconeogenesis. Catalyzes stereospecifically the conversion of dihydroxyacetone phosphate (DHAP) to D-glyceraldehyde-3-phosphate (G3P). In Albidiferax ferrireducens (strain ATCC BAA-621 / DSM 15236 / T118) (Rhodoferax ferrireducens), this protein is Triosephosphate isomerase.